Consider the following 116-residue polypeptide: Large ribosomal subunit protein uL18 (116 aa).

The protein belongs to the universal ribosomal protein uL18 family. As to quaternary structure, part of the 50S ribosomal subunit; part of the 5S rRNA/L5/L18/L25 subcomplex. Contacts the 5S and 23S rRNAs.

This is one of the proteins that bind and probably mediate the attachment of the 5S RNA into the large ribosomal subunit, where it forms part of the central protuberance. The sequence is that of Large ribosomal subunit protein uL18 from Shewanella baltica (strain OS223).